The sequence spans 721 residues: Homeobox-leucine zipper protein HDG2 (721 aa).

The segment at 17–70 is disordered; sequence NNHNYNHEDNNNEGFLRDDEFDSPNTKSGSENQEGGSGNDQDPLHPNKKKRYHR. Positions 21–34 are enriched in basic and acidic residues; that stretch reads YNHEDNNNEGFLRD. The segment at residues 64–123 is a DNA-binding region (homeobox); the sequence is KKKRYHRHTQLQIQEMEAFFKECPHPDDKQRKQLSRELNLEPLQVKFWFQNKRTQMKNHH. The stretch at 120-194 forms a coiled coil; the sequence is KNHHERHENS…DRISAIAAKY (75 aa). The region spanning 242-468 is the START domain; that stretch reads TESDKPVIID…LDRQCERLAS (227 aa).

Belongs to the HD-ZIP homeobox family. Class IV subfamily. Interacts with AIL7/PLT7, ANT, BBM and AIL1. In terms of tissue distribution, expressed in hairless cell files of the hypocotyl epidermis. Expressed in shoot apical meristem (SAM) with higher levels in L1 cells and the epidermal layer of young leaves. Expressed in primary root tips, in the L1 of apical inflorescence meristems, early flower primordia, carpel epidermis, ovule primordia, nucellus, chalaze and seed coat.

The protein resides in the nucleus. Its function is as follows. Probable transcription factor. Involved, together with PDF2, in the regulation of flower organs development by promoting the expression of APETALA 3 (AP3) in the epidermis and internal cell layers of developing flowers. The protein is Homeobox-leucine zipper protein HDG2 of Arabidopsis thaliana (Mouse-ear cress).